Here is a 250-residue protein sequence, read N- to C-terminus: Probable E3 ubiquitin-protein ligase RHY1A (250 aa).

Residues 1-10 (MTSASELFST) show a composition bias toward polar residues. The segment at 1-106 (MTSASELFST…ETQSSSFVNL (106 aa)) is disordered. The span at 29–47 (YRHHSHHHHRRHGVHHHNQ) shows a compositional bias: basic residues. Positions 48–58 (RHDSDGCDPLR) are enriched in basic and acidic residues. Residues 60 to 69 (PTPRLRRFFH) show a composition bias toward basic residues. Positions 71-80 (PIQERSRPIR) are enriched in basic and acidic residues. Over residues 91 to 102 (TDSTDTETQSSS) the composition is skewed to low complexity. The RING-type; atypical zinc-finger motif lies at 203 to 244 (CSICLESFTKGDMLISLPCTHSFHSSCLNPWLRACGDCPCCR).

It catalyses the reaction S-ubiquitinyl-[E2 ubiquitin-conjugating enzyme]-L-cysteine + [acceptor protein]-L-lysine = [E2 ubiquitin-conjugating enzyme]-L-cysteine + N(6)-ubiquitinyl-[acceptor protein]-L-lysine.. The protein operates within protein modification; protein ubiquitination. Its function is as follows. Probable E3 ubiquitin-protein ligase that may possess E3 ubiquitin ligase activity in vitro. The chain is Probable E3 ubiquitin-protein ligase RHY1A from Arabidopsis thaliana (Mouse-ear cress).